Here is a 271-residue protein sequence, read N- to C-terminus: Repressed by EFG1 protein 1 (271 aa).

The first 19 residues, 1 to 19, serve as a signal peptide directing secretion; sequence MKITNTLLNAAALLAVTEA. The tract at residues 59 to 118 is disordered; sequence QLTSKTQDSTSPTTSSVNSLTSSSATSYVETTTPAPSSSTLTTSTISSSTASEDSDATPT. Residues 67–118 show a composition bias toward low complexity; it reads STSPTTSSVNSLTSSSATSYVETTTPAPSSSTLTTSTISSSTASEDSDATPT. The SCP domain occupies 128–244; it reads LKEHNVKRAL…AWRQITVCEY (117 aa). An N-linked (GlcNAc...) asparagine glycan is attached at asparagine 254.

Belongs to the CRISP family.

Its subcellular location is the secreted. The protein resides in the cell wall. Cell wall protein involved in cell wall integrity and which plays a role in virulence. The chain is Repressed by EFG1 protein 1 (RBE1) from Candida albicans (strain SC5314 / ATCC MYA-2876) (Yeast).